Reading from the N-terminus, the 483-residue chain is Endoplasmic reticulum lectin 1 (483 aa).

A signal peptide spans 1–33 (MEEGGGGVRSLVPGGPVLLVLCGLLEASGGGRA). MRH domains follow at residues 111 to 246 (SSCS…LCSH) and 342 to 469 (SYCF…ICKI). Cys113 and Cys126 are joined by a disulfide. Asn195 carries an N-linked (GlcNAc...) asparagine glycan. 5 cysteine pairs are disulfide-bonded: Cys199–Cys232, Cys215–Cys244, Cys344–Cys357, Cys421–Cys455, and Cys436–Cys467.

As to quaternary structure, may form a complex with OS9, HSPA5, SYVN1, and SEL1L with which it interacts directly. Interacts (via PRKCSH 2 domain) with KREMEN2 (when glycosylated). Interacts with HSPA5. In terms of processing, isoform 1 and isoform 2 are N-glycosylated.

It is found in the endoplasmic reticulum lumen. Functionally, probable lectin that binds selectively to improperly folded lumenal proteins. May function in endoplasmic reticulum quality control and endoplasmic reticulum-associated degradation (ERAD) of both non-glycosylated proteins and glycoproteins. This is Endoplasmic reticulum lectin 1 (ERLEC1) from Homo sapiens (Human).